A 63-amino-acid polypeptide reads, in one-letter code: Large ribosomal subunit protein bL28 (63 aa).

Residues 1 to 20 (MSRRCAITGKGPMVGNNVSH) are disordered.

Belongs to the bacterial ribosomal protein bL28 family.

In Campylobacter curvus (strain 525.92), this protein is Large ribosomal subunit protein bL28.